Consider the following 219-residue polypeptide: Large ribosomal subunit protein bL25 (219 aa).

The disordered stretch occupies residues 193 to 219 (VSSTELEETPEVPASAVPTTDQGESAE). Polar residues predominate over residues 209-219 (VPTTDQGESAE).

This sequence belongs to the bacterial ribosomal protein bL25 family. CTC subfamily. Part of the 50S ribosomal subunit; part of the 5S rRNA/L5/L18/L25 subcomplex. Contacts the 5S rRNA. Binds to the 5S rRNA independently of L5 and L18.

Functionally, this is one of the proteins that binds to the 5S RNA in the ribosome where it forms part of the central protuberance. This Legionella pneumophila (strain Corby) protein is Large ribosomal subunit protein bL25.